A 131-amino-acid chain; its full sequence is Torsin-1A-interacting protein 2, isoform IFRG15 (131 aa).

This is Torsin-1A-interacting protein 2, isoform IFRG15 (Tor1aip2) from Mus musculus (Mouse).